We begin with the raw amino-acid sequence, 164 residues long: Ribosome maturation factor RimP (164 aa).

Belongs to the RimP family.

The protein localises to the cytoplasm. Functionally, required for maturation of 30S ribosomal subunits. This Cellvibrio japonicus (strain Ueda107) (Pseudomonas fluorescens subsp. cellulosa) protein is Ribosome maturation factor RimP.